Consider the following 584-residue polypeptide: Negative regulator of RAS-cAMP pathway (584 aa).

Thr-25 carries the phosphothreonine modification. 5 disordered regions span residues 95 to 167, 209 to 279, 291 to 320, 343 to 366, and 381 to 432; these read PIKP…STTS, PLQS…SKTS, SEDE…DDYN, NLDS…HDPV, and SNSN…SLKT. Polar residues-rich tracts occupy residues 114–127, 229–254, and 267–278; these read PPTT…TRPM, CIDN…SFPQ, and NDQNGQLSLSKT. Ser-247 and Ser-276 each carry phosphoserine. A compositionally biased stretch (acidic residues) spans 307–320; that stretch reads FYADEDDEEYDDYN. A compositionally biased stretch (polar residues) spans 343-363; that stretch reads NLDSTKSSVSSANTINSNTSH. Residues 381–392 are compositionally biased toward low complexity; the sequence is SNSNNHNTAHSE. The span at 398-432 shows a compositional bias: polar residues; the sequence is VSPTPQSSHSNIGPQPQQNPPSANGIKQQKPSLKT. Ser-442 bears the Phosphoserine mark. A Phosphoserine; by PKA modification is found at Ser-518. The disordered stretch occupies residues 551–584; it reads DNTSIANSNGNGNDDTSNQRTEALGRKTSNGGRI. The segment covering 557 to 568 has biased composition (low complexity); sequence NSNGNGNDDTSN.

The protein localises to the nucleus. Functionally, negative regulator of Ras-cAMP pathway. Involved in transcriptional regulation of galactose-inducible genes. This chain is Negative regulator of RAS-cAMP pathway (MKS1), found in Saccharomyces cerevisiae (strain ATCC 204508 / S288c) (Baker's yeast).